Reading from the N-terminus, the 262-residue chain is MEKTIIYFPKGCVIGRFVKRYKRFFVNVLVDGEEVVAHTNNTGSMLGLLNSGTPVLLSPALNPTRKLQWTLELVWTGGTYPDENKLPSFPNKEGGVTPFHSGLGFWVGVNTLIPHKFFKLAFEAGLFPWTKGYSICNTETKIGMSRLDICLHGNGVPRLWVECKNVTLVENNVALFPDAVSLRGLKHLQELKKIIDSGERAATFYCVQRKDGKFFGPAASIDPQYTEMFWKVKKRGVEIYPYHIDITTKGLSLGPILPLLSE.

It belongs to the SfsA family.

This Lawsonia intracellularis (strain PHE/MN1-00) protein is Sugar fermentation stimulation protein homolog.